Reading from the N-terminus, the 362-residue chain is MVTSAMGPSPRVEELARSGLDTIPKDYVRPEEELKSIIGNILAEEKSSEGPQLPTIDLEEMDSRDEEGRKKCHEELKKAATDWGVMHLINHGIPEELIDRVKAAGKEFFELPVEEKEAYANDQAAGNVQGYGSKLANNASGQLEWEDYFFHCVYPEHKTDLSIWPTKPPDYIPATSEYAKQLRALATKILSVLSIGLGLEKGRLEKEVGGAEDLIVQMKINFYPKCPQPELALGWEAHTDVSALTFILHNMVPGLQLFYEDKWVTAKCVPNSIIMHIGDTLEILSNGKYKSILHRGLVNKEKVRISWAVFCEPPKEKIVLQPLPETVSEVEPPRFPPRTFAQHLKHKLFRKTDGDLDEKPTY.

The interval 1–23 (MVTSAMGPSPRVEELARSGLDTI) is disordered. The Fe2OG dioxygenase domain maps to 214 to 313 (LIVQMKINFY…RISWAVFCEP (100 aa)). Fe cation contacts are provided by H238, D240, and H294. Residue R304 is part of the active site.

The protein belongs to the iron/ascorbate-dependent oxidoreductase family. It depends on Fe cation as a cofactor. Requires L-ascorbate as cofactor. In terms of tissue distribution, expressed in red but not in green forma of P.frutescens. In red forma, it is predominantly expressed in stems and leaves, but not in roots.

It catalyses the reaction a (2R,3S,4S)-leucoanthocyanidin + 2-oxoglutarate + O2 = a 4-H-anthocyanidin with a 3-hydroxy group + succinate + CO2 + 2 H2O. The protein operates within pigment biosynthesis; anthocyanin biosynthesis. In terms of biological role, oxidation of leucoanthocyanidins into anthocyanidins. The chain is Leucoanthocyanidin dioxygenase (ANS) from Perilla frutescens (Beefsteak mint).